The following is a 173-amino-acid chain: Adenine phosphoribosyltransferase (173 aa).

It belongs to the purine/pyrimidine phosphoribosyltransferase family. Homodimer.

The protein resides in the cytoplasm. The catalysed reaction is AMP + diphosphate = 5-phospho-alpha-D-ribose 1-diphosphate + adenine. It functions in the pathway purine metabolism; AMP biosynthesis via salvage pathway; AMP from adenine: step 1/1. Its function is as follows. Catalyzes a salvage reaction resulting in the formation of AMP, that is energically less costly than de novo synthesis. The protein is Adenine phosphoribosyltransferase of Methanococcus vannielii (strain ATCC 35089 / DSM 1224 / JCM 13029 / OCM 148 / SB).